The following is a 36-amino-acid chain: Gloverin (36 aa).

Its subcellular location is the secreted. Its function is as follows. Antibacterial protein. This Heliothis virescens (Tobacco budworm moth) protein is Gloverin.